The chain runs to 690 residues: Signal peptide peptidase-like 2C (690 aa).

The N-terminal stretch at 1–28 (MACLGSLHPLGSLLLLFLLLLLSPEARG) is a signal peptide. Over 29-192 (EYGLVRVVSK…APLEPVTDYN (164 aa)) the chain is Lumenal. A PA domain is found at 87–166 (DSSPRQRPLH…AVLRYTDMLD (80 aa)). N106 carries N-linked (GlcNAc...) asparagine glycosylation. The helical transmembrane segment at 193 to 213 (MAIIFILAVGTVAAGGYWAGL) threads the bilayer. Topologically, residues 214–260 (MEANKLQRRQAQRGGGLGGHNQQQTVAAERSQRAWEDDDFEDAPMDF) are cytoplasmic. Residues 261 to 283 (TPAMTGAVVTMSCSIMILLYFFY) traverse the membrane as a helical segment. Residue D284 is a topological domain, lumenal. The chain crosses the membrane as a helical span at residues 285 to 307 (CFVYVMIGIFSLGASTGLYSCLA). The Cytoplasmic segment spans residues 308-328 (PILCHLPLWRYQWVLPGQRVS). A helical transmembrane segment spans residues 329–349 (VTWPLLLLAGLCAMVTVLWVI). The Lumenal segment spans residues 350 to 354 (HRNED). Residues 355–373 (HWAWLLQDTLGVAYCLFVL) traverse the membrane as a helical segment. The Cytoplasmic portion of the chain corresponds to 374-384 (RRVRLPTFKNC). The helical transmembrane segment at 385–405 (TLFLLALLAFDVFFVFITPLF) threads the bilayer. D395 is an active-site residue. At 406 to 448 (TKTGESIMVEVASGPADSSSHERLPMVLKVPRLSFSALTLCNQ) the chain is on the lumenal side. A helical membrane pass occupies residues 449–469 (PFSILGFGDIVVPGFLVAYCH). D457 is an active-site residue. Topologically, residues 470–482 (RFDMQVQSRQVYY) are cytoplasmic. A helical membrane pass occupies residues 483-503 (MACTVAYAVGLLVTFVAMILM). Position 504 (Q504) is a topological domain, lumenal. Residues 505-525 (MGQPALLYLVSSTLLTSLAVA) traverse the membrane as a helical segment. The PAL signature appears at 508–510 (PAL). Topologically, residues 526 to 690 (TCRQEFTLFW…KKSMSAQAPL (165 aa)) are cytoplasmic. Positions 564–573 (EDAKDSRTTN) are enriched in basic and acidic residues. The interval 564–633 (EDAKDSRTTN…DPNELPSGSP (70 aa)) is disordered. Over residues 615–624 (SEGWSDTNLD) the composition is skewed to polar residues.

It belongs to the peptidase A22B family. As to quaternary structure, interacts (via active sites) with FREY; the interaction stabilizes FREY1 protein and inhibits SPPL2C proteolytic activity. Post-translationally, glycosylated. As to expression, highly expressed in testis where it is primarily localised in spermatids (at protein level).

The protein localises to the endoplasmic reticulum membrane. In terms of biological role, sperm-specific intramembrane-cleaving aspartic protease (I-CLiP) that cleaves distinct tail-anchored proteins and SNARE proteins. In elongated spermatids, modulates intracellular Ca(2+) homeostasis by controlling PLN abundance through proteolytic cleavage. During spermatogenesis, processes SNARE proteins and impacts vesicular trafficking which supports compartmental reorganization in maturating spermatids and may play a role in formation of the acrosome. In round spermatids, acts as a scaffold protein supporting FREY1 in IZUMO1 recruitment at the endoplasmic reticulum membrane and coordination of IZUMO1 complex assembly. Stabilizes FREY1 at the endoplasmic reticulum membrane through interaction. May recruit IZUMO1 interaction partners. Functionally, no difference in cleavage specificity compared to isoform 1. The protein is Signal peptide peptidase-like 2C of Mus musculus (Mouse).